The primary structure comprises 496 residues: Alanine aminotransferase 1 (496 aa).

Residue A2 is modified to N-acetylalanine. T22 carries the phosphothreonine modification. K314 is subject to N6-(pyridoxal phosphate)lysine.

Belongs to the class-I pyridoxal-phosphate-dependent aminotransferase family. Alanine aminotransferase subfamily. In terms of assembly, homodimer. Pyridoxal 5'-phosphate serves as cofactor.

Its subcellular location is the cytoplasm. It carries out the reaction L-alanine + 2-oxoglutarate = pyruvate + L-glutamate. The protein operates within amino-acid degradation; L-alanine degradation via transaminase pathway; pyruvate from L-alanine: step 1/1. Functionally, catalyzes the reversible transamination between alanine and 2-oxoglutarate to form pyruvate and glutamate. Participates in cellular nitrogen metabolism and also in liver gluconeogenesis starting with precursors transported from skeletal muscles. The chain is Alanine aminotransferase 1 (GPT) from Bos taurus (Bovine).